A 246-amino-acid polypeptide reads, in one-letter code: Ribonuclease PH (246 aa).

The tract at residues 67–87 (NMLPGSTSPRKRRDRSGKVDG) is disordered. Phosphate contacts are provided by residues R88 and 126-128 (GTR).

The protein belongs to the RNase PH family. In terms of assembly, homohexameric ring arranged as a trimer of dimers.

It catalyses the reaction tRNA(n+1) + phosphate = tRNA(n) + a ribonucleoside 5'-diphosphate. In terms of biological role, phosphorolytic 3'-5' exoribonuclease that plays an important role in tRNA 3'-end maturation. Removes nucleotide residues following the 3'-CCA terminus of tRNAs; can also add nucleotides to the ends of RNA molecules by using nucleoside diphosphates as substrates, but this may not be physiologically important. Probably plays a role in initiation of 16S rRNA degradation (leading to ribosome degradation) during starvation. The chain is Ribonuclease PH from Rhodopirellula baltica (strain DSM 10527 / NCIMB 13988 / SH1).